The sequence spans 397 residues: Elongation factor Tu (397 aa).

The tr-type G domain occupies 10–206 (KPHVNIGTIG…HIDTYIPEPT (197 aa)). The G1 stretch occupies residues 19 to 26 (GHVDHGKT). 19 to 26 (GHVDHGKT) lines the GTP pocket. Mg(2+) is bound at residue Thr26. The interval 61–65 (GITIS) is G2. The segment at 82 to 85 (DCPG) is G3. GTP contacts are provided by residues 82 to 86 (DCPGH) and 137 to 140 (NKCD). A G4 region spans residues 137–140 (NKCD). The G5 stretch occupies residues 175–177 (SAL).

It belongs to the TRAFAC class translation factor GTPase superfamily. Classic translation factor GTPase family. EF-Tu/EF-1A subfamily. As to quaternary structure, monomer.

The protein resides in the cytoplasm. It catalyses the reaction GTP + H2O = GDP + phosphate + H(+). GTP hydrolase that promotes the GTP-dependent binding of aminoacyl-tRNA to the A-site of ribosomes during protein biosynthesis. The polypeptide is Elongation factor Tu (Alkaliphilus oremlandii (strain OhILAs) (Clostridium oremlandii (strain OhILAs))).